Reading from the N-terminus, the 197-residue chain is Peptide deformylase (197 aa).

Fe cation contacts are provided by Cys-106 and His-148. Glu-149 is a catalytic residue. His-152 is a Fe cation binding site.

The protein belongs to the polypeptide deformylase family. It depends on Fe(2+) as a cofactor.

The catalysed reaction is N-terminal N-formyl-L-methionyl-[peptide] + H2O = N-terminal L-methionyl-[peptide] + formate. Removes the formyl group from the N-terminal Met of newly synthesized proteins. Requires at least a dipeptide for an efficient rate of reaction. N-terminal L-methionine is a prerequisite for activity but the enzyme has broad specificity at other positions. The chain is Peptide deformylase from Mycolicibacterium paratuberculosis (strain ATCC BAA-968 / K-10) (Mycobacterium paratuberculosis).